The primary structure comprises 395 residues: Neuromedin-U receptor 2 (395 aa).

Residues M1 to S41 are Extracellular-facing. Residues N6 and N19 are each glycosylated (N-linked (GlcNAc...) asparagine). The helical transmembrane segment at V42–I62 threads the bilayer. Topologically, residues A63–Y74 are cytoplasmic. The chain crosses the membrane as a helical span at residues Y75–V95. Topologically, residues Y96–T115 are extracellular. C111 and C196 are joined by a disulfide. The helical transmembrane segment at A116–V138 threads the bilayer. The Cytoplasmic segment spans residues A139–R157. The chain crosses the membrane as a helical span at residues I158–G178. Topologically, residues I179 to T212 are extracellular. Residue N186 is glycosylated (N-linked (GlcNAc...) asparagine). Residues S213 to L233 traverse the membrane as a helical segment. Over R234 to S257 the chain is Cytoplasmic. A helical transmembrane segment spans residues V258 to V278. The Extracellular portion of the chain corresponds to D279–L293. The helical transmembrane segment at A294 to V314 threads the bilayer. The Cytoplasmic portion of the chain corresponds to N315 to P395.

This sequence belongs to the G-protein coupled receptor 1 family. As to expression, expressed primarily in brain tissues, more specifically in medulla and spinal cord. Widespread distribution in peripheral tissues.

Its subcellular location is the cell membrane. Its function is as follows. Receptor for the neuromedin-U and neuromedin-S neuropeptides. The protein is Neuromedin-U receptor 2 (Nmur2) of Mus musculus (Mouse).